Here is a 118-residue protein sequence, read N- to C-terminus: MARFVVLVLLGLLYLSHLDAVQHSPKVQVYSRHPAENGKPNFLNCYVSGFHPPQIDITLMKNGKKMEAEQTDLSFNRDWTFYLLVHTEFTPTVEDEYSCQVNHTTLSEPKVVKWDRDM.

Residues 1 to 20 (MARFVVLVLLGLLYLSHLDA) form the signal peptide. Positions 25–113 (PKVQVYSRHP…TTLSEPKVVK (89 aa)) constitute an Ig-like C1-type domain. A disulfide bridge links Cys45 with Cys99.

Belongs to the beta-2-microglobulin family. Heterodimer of an alpha chain and a beta chain. Beta-2-microglobulin is the beta-chain of major histocompatibility complex class I molecules.

It localises to the secreted. Component of the class I major histocompatibility complex (MHC). Involved in the presentation of peptide antigens to the immune system. This is Beta-2-microglobulin (B2M) from Felis catus (Cat).